A 157-amino-acid polypeptide reads, in one-letter code: 2-C-methyl-D-erythritol 2,4-cyclodiphosphate synthase (157 aa).

A divalent metal cation contacts are provided by Asp8 and His10. 4-CDP-2-C-methyl-D-erythritol 2-phosphate-binding positions include 8 to 10 (DVH) and 34 to 35 (HS). His42 lines the a divalent metal cation pocket. 4-CDP-2-C-methyl-D-erythritol 2-phosphate-binding positions include 56 to 58 (DIG), 61 to 65 (FPDTD), 132 to 135 (TTTE), Phe139, and Arg142.

Belongs to the IspF family. As to quaternary structure, homotrimer. It depends on a divalent metal cation as a cofactor.

It carries out the reaction 4-CDP-2-C-methyl-D-erythritol 2-phosphate = 2-C-methyl-D-erythritol 2,4-cyclic diphosphate + CMP. The protein operates within isoprenoid biosynthesis; isopentenyl diphosphate biosynthesis via DXP pathway; isopentenyl diphosphate from 1-deoxy-D-xylulose 5-phosphate: step 4/6. In terms of biological role, involved in the biosynthesis of isopentenyl diphosphate (IPP) and dimethylallyl diphosphate (DMAPP), two major building blocks of isoprenoid compounds. Catalyzes the conversion of 4-diphosphocytidyl-2-C-methyl-D-erythritol 2-phosphate (CDP-ME2P) to 2-C-methyl-D-erythritol 2,4-cyclodiphosphate (ME-CPP) with a corresponding release of cytidine 5-monophosphate (CMP). The sequence is that of 2-C-methyl-D-erythritol 2,4-cyclodiphosphate synthase from Geotalea uraniireducens (strain Rf4) (Geobacter uraniireducens).